The primary structure comprises 984 residues: Probable beta-galactosidase C (984 aa).

The N-terminal stretch at 1–19 (MRLLNIFTTLCLLLWSGAA) is a signal peptide. Substrate is bound by residues Y78, N123, A124, E125, and N183. E184 functions as the Proton donor in the catalytic mechanism. Y247 is a binding site for substrate. A disulfide bridge connects residues C253 and C300. An N-linked (GlcNAc...) asparagine glycan is attached at N272. Catalysis depends on E283, which acts as the Nucleophile. Y349 is a substrate binding site. 11 N-linked (GlcNAc...) asparagine glycosylation sites follow: N387, N433, N462, N516, N583, N599, N673, N716, N756, N860, and N870.

It belongs to the glycosyl hydrolase 35 family.

It is found in the secreted. The enzyme catalyses Hydrolysis of terminal non-reducing beta-D-galactose residues in beta-D-galactosides.. Functionally, cleaves beta-linked terminal galactosyl residues from gangliosides, glycoproteins, and glycosaminoglycans. The protein is Probable beta-galactosidase C (lacC) of Sclerotinia sclerotiorum (strain ATCC 18683 / 1980 / Ss-1) (White mold).